Here is a 282-residue protein sequence, read N- to C-terminus: MAIRSLFRKKNEDGQEKGFPEGLMTKCPECRHILLTKELEKNHKVCTKCDHHFKMTAQERVAYFIDEGSFVSMDDHLQTSNPLNFPDYVEKISVAKQQTGLSEAVLTGVGTLDGEEIVVAIMDSHFRMGSMGSVVGEKITRAVEKAIELRVPVIIFTASGGARMQEGILSLMQMVKTSVALKRHSEEGLLFISIMTHPTYGGVSASFASVGDINIAEPQALIGFAGRRVIEETLREKLPNDFQKSEFLLAHGQLDAVFHRKDLRNQVAMLVKMHTKGGVQHV.

The 260-residue stretch at 23–282 (LMTKCPECRH…MHTKGGVQHV (260 aa)) folds into the CoA carboxyltransferase N-terminal domain. Zn(2+)-binding residues include C27, C30, C46, and C49. Residues 27-49 (CPECRHILLTKELEKNHKVCTKC) form a C4-type zinc finger.

Belongs to the AccD/PCCB family. As to quaternary structure, acetyl-CoA carboxylase is a heterohexamer composed of biotin carboxyl carrier protein (AccB), biotin carboxylase (AccC) and two subunits each of ACCase subunit alpha (AccA) and ACCase subunit beta (AccD). Zn(2+) is required as a cofactor.

Its subcellular location is the cytoplasm. It catalyses the reaction N(6)-carboxybiotinyl-L-lysyl-[protein] + acetyl-CoA = N(6)-biotinyl-L-lysyl-[protein] + malonyl-CoA. Its pathway is lipid metabolism; malonyl-CoA biosynthesis; malonyl-CoA from acetyl-CoA: step 1/1. Its function is as follows. Component of the acetyl coenzyme A carboxylase (ACC) complex. Biotin carboxylase (BC) catalyzes the carboxylation of biotin on its carrier protein (BCCP) and then the CO(2) group is transferred by the transcarboxylase to acetyl-CoA to form malonyl-CoA. This chain is Acetyl-coenzyme A carboxylase carboxyl transferase subunit beta 1, found in Lysinibacillus sphaericus (strain C3-41).